We begin with the raw amino-acid sequence, 156 residues long: Ribosomal RNA large subunit methyltransferase H (156 aa).

Residues L73, G104, and 123–128 (LSPLTL) each bind S-adenosyl-L-methionine.

Belongs to the RNA methyltransferase RlmH family. As to quaternary structure, homodimer.

The protein localises to the cytoplasm. It catalyses the reaction pseudouridine(1915) in 23S rRNA + S-adenosyl-L-methionine = N(3)-methylpseudouridine(1915) in 23S rRNA + S-adenosyl-L-homocysteine + H(+). Functionally, specifically methylates the pseudouridine at position 1915 (m3Psi1915) in 23S rRNA. In Aliivibrio fischeri (strain MJ11) (Vibrio fischeri), this protein is Ribosomal RNA large subunit methyltransferase H.